The following is a 97-amino-acid chain: MDLEEIRKKKLEELKKEEAKRKLLEQLESNVMQYLTSEAKQRLYNIKMAHPEKYELALQILYRVIQQTPTIIDDTTLKKLLAKLFQKREPKIRFIRK.

Belongs to the PDCD5 family.

This Nanoarchaeum equitans (strain Kin4-M) protein is DNA-binding protein NEQ150.